The chain runs to 416 residues: MFADLDYDIEEDKLGIPTVPGKVTLQKDAQNLIGISIGGGAQYCPCLYIVQVFDNTPAALDGTVAAGDEITGVNGRSIKGKTKVEVAKMIQEVKGEVTIHYNKLQADPKQGMSLDIVLKKVKHRLVENMSSGTADALGLSRAILCNDGLVKRLEELERTAELYKGMTEHTKNLLRAFYELSQTHRAFGDVFSVIGVREPQPAASEAFVKFADAHRSIEKFGIRLLKTIKPMLTDLNTYLNKAIPDTRLTIKKYLDVKFEYLSYCLKVKEMDDEEYSCIALGEPLYRVSTGNYEYRLILRCRQEARARFSQMRKDVLEKMELLDQKHVQDIVFQLQRFVSTMSKYYNDCYAVLRDADVFPIEVDLAHTTLAYGPNQGGFTDGEDEEEEEEDGAAREVSKDARGATGPTDKGGSWCDS.

The region spanning 22 to 105 is the PDZ domain; it reads KVTLQKDAQN…EVTIHYNKLQ (84 aa). Residues cysteine 44 and cysteine 46 each contribute to the Zn(2+) site. At threonine 82 the chain carries Phosphothreonine. The AH domain maps to 144–357; the sequence is LCNDGLVKRL…CYAVLRDADV (214 aa). A disordered region spans residues 373–416; sequence PNQGGFTDGEDEEEEEEDGAAREVSKDARGATGPTDKGGSWCDS. Over residues 380–390 the composition is skewed to acidic residues; the sequence is DGEDEEEEEED. Residues 391 to 401 show a composition bias toward basic and acidic residues; sequence GAAREVSKDAR. A lipid anchor (S-palmitoyl cysteine; by DHHC8) is attached at cysteine 414.

In terms of assembly, monomer and homodimer. Interacts with CXADR. Interacts presynaptically with the glutamate receptors GRIA2, GRIA3, GRIK3, isoform 3 of GRIA4, isoform A of GRM4, GRM7 and GRM8; with NAPA and NAPB; and with BTG2. The interaction with NAPA and NAPB disrupts the interaction with GRIA2, conducting to the internalization of GRIA2. Interacts with PRKCA; with the amine transporters SLC6A2 and SLC6A3; with the channels ASIC1 and ASIC2; with the GTP-binding proteins ARF1 and ARF3; with the ephrin receptor tyrosine kinases EPHA7, EPHB1 and EPHB2; with ERBB2 and through its PDZ domain with the C-terminal tail of PRLHR. Interacts with UNC5A. Interacts (via AH domain) with NCS1/FREQ; in a calcium-dependent manner. Interacts with F-actin and associates with the ARP2/3 complex. Interacts (via PDZ domain) with ARF1 (activated); the interaction blocks Arp2/3 complex inhibition. Interacts with SORCS3. Phosphorylation at Thr-82 appears to inhibit the interaction with AMPA receptors. Post-translationally, palmitoylation on Cys-414 is essential for long-term synaptic depression (LTD). In terms of tissue distribution, ubiquitous.

The protein localises to the cytoplasm. It localises to the perinuclear region. It is found in the membrane. The protein resides in the postsynaptic density. Its subcellular location is the synapse. The protein localises to the synaptosome. It localises to the cytoskeleton. In terms of biological role, probable adapter protein that bind to and organize the subcellular localization of a variety of membrane proteins containing some PDZ recognition sequence. Involved in the clustering of various receptors, possibly by acting at the receptor internalization level. Plays a role in synaptic plasticity by regulating the trafficking and internalization of AMPA receptors. May be regulated upon PRKCA activation. May regulate ASIC1/ASIC3 channel. Regulates actin polymerization by inhibiting the actin-nucleating activity of the Arp2/3 complex; the function is competitive with nucleation promoting factors and is linked to neuronal morphology regulation and AMPA receptor (AMPAR) endocytosis. Via interaction with the Arp2/3 complex involved in regulation of synaptic plasicity of excitatory synapses and required for spine shrinkage during long-term depression (LTD). Involved in regulation of astrocyte morphology, antagonistic to Arp2/3 complex activator WASL/N-WASP function. In Rattus norvegicus (Rat), this protein is PRKCA-binding protein (Pick1).